Here is a 201-residue protein sequence, read N- to C-terminus: Recombination protein RecR (201 aa).

Residues 57–72 form a C4-type zinc finger; it reads CRSCRTFTEEDECNIC. The 96-residue stretch at 81–176 folds into the Toprim domain; it reads GQLCVVEMPE…KVTRIAHGIP (96 aa).

Belongs to the RecR family.

May play a role in DNA repair. It seems to be involved in an RecBC-independent recombinational process of DNA repair. It may act with RecF and RecO. This chain is Recombination protein RecR, found in Actinobacillus pleuropneumoniae serotype 5b (strain L20).